The following is a 312-amino-acid chain: Transcription initiation factor IIB-2 (312 aa).

Residues 2-34 form a TFIIB-type zinc finger; the sequence is SDAFCSDCKRHTEVVFDHSAGDTVCSECGLVLE. Positions 6, 9, 26, and 29 each coordinate Zn(2+). Tandem repeats lie at residues 115-192 and 216-290.

This sequence belongs to the TFIIB family. Associates with TFIID-IIA (DA complex) to form TFIID-IIA-IIB (DAB-complex) which is then recognized by polymerase II.

The protein resides in the nucleus. In terms of biological role, general factor that plays a major role in the activation of eukaryotic genes transcribed by RNA polymerase II. The protein is Transcription initiation factor IIB-2 (TFIIB2) of Arabidopsis thaliana (Mouse-ear cress).